The sequence spans 488 residues: Proline--tRNA ligase (488 aa).

It belongs to the class-II aminoacyl-tRNA synthetase family. ProS type 3 subfamily. Homodimer.

The protein resides in the cytoplasm. The catalysed reaction is tRNA(Pro) + L-proline + ATP = L-prolyl-tRNA(Pro) + AMP + diphosphate. In terms of biological role, catalyzes the attachment of proline to tRNA(Pro) in a two-step reaction: proline is first activated by ATP to form Pro-AMP and then transferred to the acceptor end of tRNA(Pro). Can inadvertently accommodate and process cysteine. The chain is Proline--tRNA ligase (proS) from Borreliella burgdorferi (strain ATCC 35210 / DSM 4680 / CIP 102532 / B31) (Borrelia burgdorferi).